The chain runs to 282 residues: MARKKLKKRKLLISLFFLVSIPLALFVLATTLSKPIEISKETEEIDEQQVFIDSLSGHAQILYEKYHVLPSITIAQAILESDWGNSELAAKANNLFGVKGNYKGHHVTMETDEVEKGKRKTIRAKFRKYSTFFESMDDHAQLFVRGTSWNKKKYKPVLEAGNYKEAATALQTSGYATDPDYADKISAIVEKYDLDEYDEVNPSLKSVDLNASIKDSAVQDVWSKPSTDDRSIRLTSAQSYVGKDIKVVSKKQKGQSVWYQFQINDKLIGWIDDSAVEIKEAT.

The N-terminal stretch at 1 to 29 is a signal peptide; sequence MARKKLKKRKLLISLFFLVSIPLALFVLA. Positions 203-281 constitute a GW domain; the sequence is SLKSVDLNAS…DDSAVEIKEA (79 aa).

It belongs to the glycosyl hydrolase 73 family. It depends on Mg(2+) as a cofactor.

The protein resides in the secreted. It is found in the cell wall. Inhibited by EDTA. Its function is as follows. Is the major glucosaminidase responsible for peptidoglycan structural determination during vegetative growth. Catalyzes the hydrolysis of 1,4-beta-linkages between N-acetyl-D-glucosamine and N-acetylmuramic acid residues in peptidoglycan. Acts processively from the ends of the glycan strands. Also plays a role in motility, chemotaxis and cell division. The sequence is that of Exo-glucosaminidase LytG (lytG) from Bacillus subtilis (strain 168).